We begin with the raw amino-acid sequence, 382 residues long: Methylthioribose-1-phosphate isomerase (382 aa).

D258 serves as the catalytic Proton donor.

The protein belongs to the eIF-2B alpha/beta/delta subunits family. MtnA subfamily.

The protein localises to the cytoplasm. The protein resides in the nucleus. The enzyme catalyses 5-(methylsulfanyl)-alpha-D-ribose 1-phosphate = 5-(methylsulfanyl)-D-ribulose 1-phosphate. It participates in amino-acid biosynthesis; L-methionine biosynthesis via salvage pathway; L-methionine from S-methyl-5-thio-alpha-D-ribose 1-phosphate: step 1/6. Catalyzes the interconversion of methylthioribose-1-phosphate (MTR-1-P) into methylthioribulose-1-phosphate (MTRu-1-P). The chain is Methylthioribose-1-phosphate isomerase from Laccaria bicolor (strain S238N-H82 / ATCC MYA-4686) (Bicoloured deceiver).